The chain runs to 94 residues: Integration host factor subunit beta (94 aa).

Belongs to the bacterial histone-like protein family. In terms of assembly, heterodimer of an alpha and a beta chain.

In terms of biological role, this protein is one of the two subunits of integration host factor, a specific DNA-binding protein that functions in genetic recombination as well as in transcriptional and translational control. This chain is Integration host factor subunit beta, found in Brucella abortus (strain S19).